The primary structure comprises 360 residues: Protein NDRG2 (360 aa).

Positions 324 to 360 are disordered; it reads SRTASLSSEGNRSRSRTLSQSSESGGGPPAPLAEVTC.

The protein belongs to the NDRG family.

It is found in the cytoplasm. Functionally, contributes to the regulation of the Wnt signaling pathway. Down-regulates CTNNB1-mediated transcriptional activation of target genes. May be involved in neuron differentiation. This chain is Protein NDRG2 (ndrg2), found in Xenopus laevis (African clawed frog).